We begin with the raw amino-acid sequence, 150 residues long: MEVILLSKIKKLGDSGAIVHVKSGYARNFLIPKGKAILASKKNIESFEAQRVELEKENISKLLIAQSRAEKIKTIKSITIPSKVGKEGKIFGSIGIRNIIKEMNLLGIKVNKKEIKLPNGVLRQVGEHKVIFQPHNEVCEYFIVNIISKK.

It belongs to the bacterial ribosomal protein bL9 family.

In terms of biological role, binds to the 23S rRNA. In Buchnera aphidicola subsp. Schizaphis graminum (strain Sg), this protein is Large ribosomal subunit protein bL9.